The primary structure comprises 218 residues: Large ribosomal subunit protein bL25 (218 aa).

The disordered stretch occupies residues 185–218; that stretch reads ARAAEEEAPAAEETTAEPELVRERREPRAEEEEE. The span at 190–200 shows a compositional bias: acidic residues; the sequence is EEAPAAEETTA. Residues 203 to 212 are compositionally biased toward basic and acidic residues; the sequence is ELVRERREPR.

This sequence belongs to the bacterial ribosomal protein bL25 family. CTC subfamily. In terms of assembly, part of the 50S ribosomal subunit; part of the 5S rRNA/L5/L18/L25 subcomplex. Contacts the 5S rRNA. Binds to the 5S rRNA independently of L5 and L18.

In terms of biological role, this is one of the proteins that binds to the 5S RNA in the ribosome where it forms part of the central protuberance. The polypeptide is Large ribosomal subunit protein bL25 (Roseiflexus castenholzii (strain DSM 13941 / HLO8)).